The chain runs to 298 residues: 4-diphosphocytidyl-2-C-methyl-D-erythritol kinase (298 aa).

Residue Lys19 is part of the active site. 106 to 116 contacts ATP; that stretch reads PVASGIGGGSA. Residue Asp148 is part of the active site.

Belongs to the GHMP kinase family. IspE subfamily.

It carries out the reaction 4-CDP-2-C-methyl-D-erythritol + ATP = 4-CDP-2-C-methyl-D-erythritol 2-phosphate + ADP + H(+). Its pathway is isoprenoid biosynthesis; isopentenyl diphosphate biosynthesis via DXP pathway; isopentenyl diphosphate from 1-deoxy-D-xylulose 5-phosphate: step 3/6. Catalyzes the phosphorylation of the position 2 hydroxy group of 4-diphosphocytidyl-2C-methyl-D-erythritol. In Rhizobium leguminosarum bv. trifolii (strain WSM2304), this protein is 4-diphosphocytidyl-2-C-methyl-D-erythritol kinase.